A 557-amino-acid chain; its full sequence is Urocanate hydratase (557 aa).

Residues 52-53 (GG), glutamine 130, 176-178 (GMG), glutamate 196, arginine 201, 242-243 (NA), 263-267 (QTSAH), 273-274 (YL), and tyrosine 322 contribute to the NAD(+) site. The active site involves cysteine 410. NAD(+) is bound at residue glycine 492.

Belongs to the urocanase family. The cofactor is NAD(+).

The protein resides in the cytoplasm. It carries out the reaction 4-imidazolone-5-propanoate = trans-urocanate + H2O. It participates in amino-acid degradation; L-histidine degradation into L-glutamate; N-formimidoyl-L-glutamate from L-histidine: step 2/3. Catalyzes the conversion of urocanate to 4-imidazolone-5-propionate. The protein is Urocanate hydratase of Pseudoalteromonas translucida (strain TAC 125).